The primary structure comprises 208 residues: Protein-L-isoaspartate O-methyltransferase (208 aa).

Ser-59 is an active-site residue.

This sequence belongs to the methyltransferase superfamily. L-isoaspartyl/D-aspartyl protein methyltransferase family.

It is found in the cytoplasm. It carries out the reaction [protein]-L-isoaspartate + S-adenosyl-L-methionine = [protein]-L-isoaspartate alpha-methyl ester + S-adenosyl-L-homocysteine. Functionally, catalyzes the methyl esterification of L-isoaspartyl residues in peptides and proteins that result from spontaneous decomposition of normal L-aspartyl and L-asparaginyl residues. It plays a role in the repair and/or degradation of damaged proteins. This chain is Protein-L-isoaspartate O-methyltransferase, found in Sodalis glossinidius (strain morsitans).